The chain runs to 339 residues: Phenylalanine--tRNA ligase alpha subunit (339 aa).

Glu253 lines the Mg(2+) pocket.

Belongs to the class-II aminoacyl-tRNA synthetase family. Phe-tRNA synthetase alpha subunit type 1 subfamily. As to quaternary structure, tetramer of two alpha and two beta subunits. Mg(2+) serves as cofactor.

It is found in the cytoplasm. It carries out the reaction tRNA(Phe) + L-phenylalanine + ATP = L-phenylalanyl-tRNA(Phe) + AMP + diphosphate + H(+). The sequence is that of Phenylalanine--tRNA ligase alpha subunit from Alcanivorax borkumensis (strain ATCC 700651 / DSM 11573 / NCIMB 13689 / SK2).